Reading from the N-terminus, the 1469-residue chain is uncharacterized protein (1469 aa).

Residues 146–180 (GDHITPKEEEEKEKEKEKEKEKEKEKEKEKEKDSE) show a composition bias toward basic and acidic residues. Disordered stretches follow at residues 146 to 186 (GDHI…LQEQ), 231 to 255 (IQNN…DNNN), 306 to 344 (TTTT…GGDS), 430 to 455 (LNFN…PYHY), 520 to 560 (PVKN…NNNS), 654 to 706 (TTTT…PLVR), 719 to 755 (RTQT…VKNQ), 881 to 958 (YNNI…NIIN), and 1329 to 1369 (NCSS…NSSN). 5 stretches are compositionally biased toward low complexity: residues 232-241 (QNNQNNQNNN), 306-327 (TTTT…ISNT), 430-449 (LNFN…NNNN), 523-559 (NNNN…INNN), and 654-693 (TTTT…TTTP). Residues 719–731 (RTQTQLQTKIQPK) show a composition bias toward polar residues. The span at 732–749 (SPQPQPTAAPEPQKPPTP) shows a compositional bias: pro residues. Composition is skewed to low complexity over residues 1329 to 1347 (NCSS…SGSE) and 1354 to 1369 (RSNT…NSSN).

This is an uncharacterized protein from Dictyostelium discoideum (Social amoeba).